Reading from the N-terminus, the 481-residue chain is Serralysin B (481 aa).

Positions 1 to 15 are excised as a propeptide; sequence MQQNEKASLNTSAAA. A Zn(2+)-binding site is contributed by H189. E190 is an active-site residue. The Zn(2+) site is built by H193 and Y230. Residues R267, G269, T271, D299, G301, G302, D304, T341, E343, G348, G350, D352, N357, A359, N361, G365, G366, A367, G368, D370, G374, G377, D379, G383, G384, A385, G386, D388, D397, D404, and D414 each coordinate Ca(2+). Hemolysin-type calcium-binding repeat units follow at residues 346–363, 364–381, and 382–399; these read IGGSGNDILIGNGADNIL, QGGAGDDVLYGSTGADTL, and TGGAGRDIFVYGSGQDST.

The protein belongs to the peptidase M10B family. Ca(2+) is required as a cofactor. It depends on Zn(2+) as a cofactor.

The protein localises to the secreted. The catalysed reaction is Preferential cleavage of bonds with hydrophobic residues in P1'.. In Dickeya chrysanthemi (Pectobacterium chrysanthemi), this protein is Serralysin B (prtB).